Consider the following 181-residue polypeptide: Endoglucanase (181 aa).

Residues C4 and C16 are joined by a disulfide bond. D24 serves as the catalytic Nucleophile. Cystine bridges form between C30–C69, C32–C176, C65–C178, C72–C157, and C103–C113. D132 acts as the Proton donor in catalysis.

As to expression, digestive gland.

It carries out the reaction Endohydrolysis of (1-&gt;4)-beta-D-glucosidic linkages in cellulose, lichenin and cereal beta-D-glucans.. Active towards the soluble carboxymethylcellulose (CMC). Possesses expansin activity too. The polypeptide is Endoglucanase (Mytilus edulis (Blue mussel)).